The primary structure comprises 236 residues: Purine nucleoside phosphorylase DeoD-type (236 aa).

His5 is an a purine D-ribonucleoside binding site. Phosphate is bound by residues Gly21, Arg25, Arg44, and 88-91; that span reads RVGT. A purine D-ribonucleoside-binding positions include 180–182 and 204–205; these read EME and SD. Asp205 functions as the Proton donor in the catalytic mechanism.

The protein belongs to the PNP/UDP phosphorylase family. Homohexamer; trimer of homodimers.

It carries out the reaction a purine D-ribonucleoside + phosphate = a purine nucleobase + alpha-D-ribose 1-phosphate. The catalysed reaction is a purine 2'-deoxy-D-ribonucleoside + phosphate = a purine nucleobase + 2-deoxy-alpha-D-ribose 1-phosphate. Its function is as follows. Catalyzes the reversible phosphorolytic breakdown of the N-glycosidic bond in the beta-(deoxy)ribonucleoside molecules, with the formation of the corresponding free purine bases and pentose-1-phosphate. This chain is Purine nucleoside phosphorylase DeoD-type, found in Shewanella baltica (strain OS155 / ATCC BAA-1091).